Consider the following 65-residue polypeptide: Trypsin inhibitor 1 (65 aa).

Cystine bridges form between C39-C56, C46-C58, and C52-C64.

The protein belongs to the protease inhibitor I7 (squash-type serine protease inhibitor) family.

It is found in the secreted. Inhibits trypsin. In Trichosanthes kirilowii (Chinese snake gourd), this protein is Trypsin inhibitor 1.